Consider the following 109-residue polypeptide: Class I hydrophobin 18 (109 aa).

Residues 1 to 20 form the signal peptide; it reads MFTEQVLNVIILLQTATVTA. Disulfide bonds link cysteine 28–cysteine 88, cysteine 35–cysteine 82, cysteine 36–cysteine 69, and cysteine 89–cysteine 102. N-linked (GlcNAc...) asparagine glycosylation is found at asparagine 91 and asparagine 106.

The protein belongs to the fungal hydrophobin family. As to quaternary structure, self-assembles to form functional amyloid fibrils called rodlets. Self-assembly into fibrillar rodlets occurs spontaneously at hydrophobic:hydrophilic interfaces and the rodlets further associate laterally to form amphipathic monolayers.

It localises to the secreted. The protein localises to the cell wall. Its function is as follows. Aerial growth, conidiation, and dispersal of filamentous fungi in the environment rely upon a capability of their secreting small amphipathic proteins called hydrophobins (HPBs) with low sequence identity. Class I can self-assemble into an outermost layer of rodlet bundles on aerial cell surfaces, conferring cellular hydrophobicity that supports fungal growth, development and dispersal; whereas Class II form highly ordered films at water-air interfaces through intermolecular interactions but contribute nothing to the rodlet structure. The protein is Class I hydrophobin 18 of Pleurotus ostreatus (strain PC15) (Oyster mushroom).